We begin with the raw amino-acid sequence, 2426 residues long: Protein SON (2426 aa).

N-acetylalanine is present on A2. N6-acetyllysine is present on K16. Polar residues predominate over residues 24–42; it reads LSSGRNEGQLNGETNTPIE. A disordered region spans residues 24 to 56; that stretch reads LSSGRNEGQLNGETNTPIEGNQAGDAAASARSL. A Glycyl lysine isopeptide (Lys-Gly) (interchain with G-Cter in SUMO2) cross-link involves residue K64. The segment covering 77-88 has biased composition (basic and acidic residues); that stretch reads LRYKPDLKEGSR. The tract at residues 77-155 is disordered; it reads LRYKPDLKEG…GNIDLESDSF (79 aa). A Phosphoserine modification is found at S94. The segment covering 106 to 130 has biased composition (basic residues); the sequence is KKSKKHKKHKNKKKKKKKEKEKKYK. Over residues 131 to 146 the composition is skewed to basic and acidic residues; sequence RQPEESESKTKSHDDG. Residues S142, S152, S154, S160, and S283 each carry the phosphoserine modification. Position 288 is an N6-acetyllysine (K288). Residues 305-328 are disordered; it reads TLVVSSETPTEVYPEPSTSTTMDF. T400 carries the post-translational modification Phosphothreonine. The segment at 406-442 is disordered; that stretch reads PGPSATPVPELPGPLSTPVPELPGPPATAVPELPGPS. Residues 409 to 442 are compositionally biased toward pro residues; sequence SATPVPELPGPLSTPVPELPGPPATAVPELPGPS. The tract at residues 726–895 is 17 X 10 AA tandem repeats of L-A-[ST]-[NSG]-[TS]-MDSQM; sequence LASNTMDSQM…LASGTMDAQM (170 aa). Residues 912–988 form an 11 X 7 AA tandem repeats of [DR]-P-Y-R-[LI][AG][QHP] region; the sequence is DPYRLAQDPY…IAPRPYRLAP (77 aa). R950 carries the omega-N-methylarginine modification. T959 carries the phosphothreonine modification. Phosphoserine is present on S998. Repeat copies occupy residues 1006 to 1011, 1014 to 1019, 1021 to 1026, 1030 to 1035, 1038 to 1043, 1046 to 1051, 1055 to 1060, 1063 to 1068, 1071 to 1076, 1080 to 1085, 1089 to 1094, 1100 to 1105, 1111 to 1116, and 1121 to 1126. The 14 X 6 AA repeats of [ED]-R-S-M-M-S stretch occupies residues 1006–1126; that stretch reads ERSMMSSYER…SYTADRSMMS (121 aa). Position 1007 is an asymmetric dimethylarginine (R1007). An Asymmetric dimethylarginine modification is found at R1022. 2 positions are modified to phosphoserine: S1035 and S1043. Phosphoserine occurs at positions 1060 and 1068. S1082 carries the phosphoserine modification. Residues 1144–1236 form a disordered region; it reads YMVPPLPPEE…PTDYSVSASD (93 aa). Residues 1147-1179 form a 3 X 11 AA tandem repats of P-P-L-P-P-E-E-P-P-[TME]-[MTG] region; sequence PPLPPEEPPTMPPLPPEEPPMTPPLPPEEPPEG. The span at 1147 to 1180 shows a compositional bias: pro residues; sequence PPLPPEEPPTMPPLPPEEPPMTPPLPPEEPPEGP. Over residues 1186-1196 the composition is skewed to polar residues; sequence QSALTAENTWP. Residues 1198 to 1224 are compositionally biased toward low complexity; the sequence is EVPSSPSEESVSQPEPPVSQSEISEPS. Positions 1359–1390 are 4 X 8 AA tandem repeats of V-L-E-SS-[AVT]-VT; sequence VLESSAVTVLESSTVTVLESSTVTVLEPSVVT. 2 positions are modified to phosphoserine: S1556 and S1651. Positions 1645-1722 are disordered; sequence TSPSGGSEAD…KETLPDSGFS (78 aa). Residues 1677–1689 are compositionally biased toward basic and acidic residues; that stretch reads KDTEEPLPVKESD. Residues S1697, S1701, S1747, S1759, S1766, S1769, S1782, and S1783 each carry the phosphoserine modification. The tract at residues 1754–2054 is disordered; sequence GPLLASDVGR…RSPKRLTDLD (301 aa). Composition is skewed to basic and acidic residues over residues 1790–1801, 1809–1822, and 1830–1845; these read YEIFVKVKDTHE, RDKGEKEKKRDSSL, and KSSEHKSRKRTSESRS. Basic residues-rich tracts occupy residues 1846 to 1909 and 1917 to 1948; these read RARK…RKRS and TVRARSRTPSRRSRSHTPSRRRRSRSVGRRRS. 9 consecutive repeat copies span residues 1925–1931, 1934–1952, 1953–1959, 1960–1966, 1967–1973, 1974–1980, 1981–1987, 1988–1994, and 1995–2013. Residues 1925-1994 form a 7 X 7 AA repeats of P-S-R-R-S-R-[TS] region; sequence PSRRSRSHTP…SRTPSRRSRT (70 aa). The tract at residues 1934 to 2013 is 2 X 19 AA repeats of P-S-R-R-R-R-S-R-S-V-V-R-R-R-S-F-S-I-S; that stretch reads PSRRRRSRSV…VVRRRSFSIS (80 aa). S1948, S1950, and S1952 each carry phosphoserine. The segment covering 1955–2009 has biased composition (basic residues); sequence RRSRTPSRRSRTPSRRSRTPSRRSRTPSRRSRTPSRRSRTPSRRRRSRSVVRRRS. A phosphoserine mark is found at S2009, S2011, S2013, S2029, and S2031. Positions 2013-2039 are 3 X tandem repeats of [ST]-P-[VLI]-R-[RL]-[RK]-[RF]-S-R; sequence SPVRLRRSRTPLRRRFSRSPIRRKRSR. The segment covering 2016–2038 has biased composition (basic residues); it reads RLRRSRTPLRRRFSRSPIRRKRS. The segment covering 2039–2054 has biased composition (basic and acidic residues); it reads RSSERGRSPKRLTDLD. The residue at position 2055 (K2055) is an N6-acetyllysine; alternate. A Glycyl lysine isopeptide (Lys-Gly) (interchain with G-Cter in SUMO2); alternate cross-link involves residue K2055. A Glycyl lysine isopeptide (Lys-Gly) (interchain with G-Cter in SUMO2) cross-link involves residue K2092. The residue at position 2129 (S2129) is a Phosphoserine. Residue K2149 forms a Glycyl lysine isopeptide (Lys-Gly) (interchain with G-Cter in SUMO2) linkage. T2163 carries the phosphothreonine modification. Residues 2200–2220 form a disordered region; sequence KNGEENKDDDNVFSSNLPSEP. Phosphoserine is present on S2238. The 47-residue stretch at 2305–2351 folds into the G-patch domain; it reads TGGMGAVLMRKMGWREGEGLGKNKEGNKEPILVDFKTDRKGLVAVGE. The DRBM domain maps to 2371-2426; it reads HPVSALMEICNKRRWQPPEFLLVHDSGPDHRKHFLFRVLRNGALTRPNCMFFLNRY.

Interacts with SRSF2. Associates with the spliceosome. Interacts with the AML1-MTG8 (AML1-ETO) fusion protein, possibly leading to trigger signals inhibiting leukemogenesis. Interacts with USH1G. Widely expressed, with the higher expression seen in leukocyte and heart.

The protein resides in the nucleus speckle. Functionally, RNA-binding protein that acts as a mRNA splicing cofactor by promoting efficient splicing of transcripts that possess weak splice sites. Specifically promotes splicing of many cell-cycle and DNA-repair transcripts that possess weak splice sites, such as TUBG1, KATNB1, TUBGCP2, AURKB, PCNT, AKT1, RAD23A, and FANCG. Probably acts by facilitating the interaction between Serine/arginine-rich proteins such as SRSF2 and the RNA polymerase II. Also binds to DNA; binds to the consensus DNA sequence: 5'-GA[GT]AN[CG][AG]CC-3'. May indirectly repress hepatitis B virus (HBV) core promoter activity and transcription of HBV genes and production of HBV virions. Essential for correct RNA splicing of multiple genes critical for brain development, neuronal migration and metabolism, including TUBG1, FLNA, PNKP, WDR62, PSMD3, PCK2, PFKL, IDH2, and ACY1. In Homo sapiens (Human), this protein is Protein SON (SON).